The following is a 366-amino-acid chain: Ribosomal RNA large subunit methyltransferase M (366 aa).

S-adenosyl-L-methionine-binding positions include Ser-188, 221 to 224 (CPGG), Asp-240, Asp-260, and Asp-277. Lys-306 acts as the Proton acceptor in catalysis.

This sequence belongs to the class I-like SAM-binding methyltransferase superfamily. RNA methyltransferase RlmE family. RlmM subfamily. Monomer.

The protein localises to the cytoplasm. It carries out the reaction cytidine(2498) in 23S rRNA + S-adenosyl-L-methionine = 2'-O-methylcytidine(2498) in 23S rRNA + S-adenosyl-L-homocysteine + H(+). In terms of biological role, catalyzes the 2'-O-methylation at nucleotide C2498 in 23S rRNA. The protein is Ribosomal RNA large subunit methyltransferase M of Sodalis glossinidius (strain morsitans).